Reading from the N-terminus, the 655-residue chain is p-hydroxybenzoic acid efflux pump subunit AaeB (655 aa).

The next 11 helical transmembrane spans lie at 13–33 (FAVKLATAIVLALFVGFHFQL), 38–58 (WAVLTAAIVAAGPAFAAGGEP), 69–89 (LRIIGTFIGCIAGLVIIIAMI), 93–113 (LLMILVCCIWAGFCTWISSLV), 121–141 (WGLAGYTALIIVITIQPEPLL), 152–172 (EIVIGIVCAIMADLLFSPRSI), 370–390 (LFWLWTGWTSGSGAMVMIAVV), 407–427 (FIYGTLAALPLGLLYFLVIIP), 431–451 (QSMLLLCISLAVLGFFLGIEV), 459–479 (MGALASTINIIVLDNPMTFHF), and 482–502 (FLDSALGQIVGCVLAFTVILL).

It belongs to the aromatic acid exporter ArAE (TC 2.A.85) family.

The protein resides in the cell inner membrane. Its function is as follows. Forms an efflux pump with AaeA. Could function as a metabolic relief valve, allowing to eliminate certain compounds when they accumulate to high levels in the cell. This chain is p-hydroxybenzoic acid efflux pump subunit AaeB, found in Escherichia coli (strain K12 / MC4100 / BW2952).